Here is a 176-residue protein sequence, read N- to C-terminus: Inorganic pyrophosphatase (176 aa).

Residues Lys30, Arg44, and Tyr56 each coordinate substrate. Mg(2+) is bound by residues Asp66, Asp71, and Asp103. Tyr142 serves as a coordination point for substrate.

The protein belongs to the PPase family. Homohexamer. Mg(2+) is required as a cofactor.

It localises to the cytoplasm. It carries out the reaction diphosphate + H2O = 2 phosphate + H(+). Catalyzes the hydrolysis of inorganic pyrophosphate (PPi) forming two phosphate ions. This chain is Inorganic pyrophosphatase, found in Salmonella typhi.